The primary structure comprises 582 residues: Threonine--tRNA ligase (582 aa).

Residues 185 to 478 (DHRKLGKELE…LTEQYGGAFP (294 aa)) form a catalytic region. Zn(2+) contacts are provided by Cys278, His329, and His455.

This sequence belongs to the class-II aminoacyl-tRNA synthetase family. Homodimer. Requires Zn(2+) as cofactor.

It is found in the cytoplasm. The enzyme catalyses tRNA(Thr) + L-threonine + ATP = L-threonyl-tRNA(Thr) + AMP + diphosphate + H(+). Its function is as follows. Catalyzes the attachment of threonine to tRNA(Thr) in a two-step reaction: L-threonine is first activated by ATP to form Thr-AMP and then transferred to the acceptor end of tRNA(Thr). Also edits incorrectly charged L-seryl-tRNA(Thr). In Dehalococcoides mccartyi (strain ATCC BAA-2266 / KCTC 15142 / 195) (Dehalococcoides ethenogenes (strain 195)), this protein is Threonine--tRNA ligase.